Reading from the N-terminus, the 304-residue chain is Non-specific ribonucleoside hydrolase RihC (304 aa).

Residue H233 is part of the active site.

This sequence belongs to the IUNH family. RihC subfamily.

In terms of biological role, hydrolyzes both purine and pyrimidine ribonucleosides with a broad-substrate specificity. The sequence is that of Non-specific ribonucleoside hydrolase RihC from Escherichia coli O139:H28 (strain E24377A / ETEC).